The following is a 238-amino-acid chain: Cysteine-rich venom protein pseudechetoxin-like (238 aa).

An N-terminal signal peptide occupies residues 1-19; it reads MIAFIVLLSLAAVLQQSSG. The propeptide occupies 20–28; it reads TVDFASESS. Positions 38 to 164 constitute an SCP domain; it reads VDKHNDLRRS…STKYLYVCQY (127 aa). 8 cysteine pairs are disulfide-bonded: Cys75–Cys153, Cys92–Cys165, Cys148–Cys162, Cys184–Cys191, Cys187–Cys196, Cys200–Cys233, Cys209–Cys227, and Cys218–Cys231. In terms of domain architecture, ShKT spans 200–233; the sequence is CKHNDDLSNCKPLAKKSKCQTEWIKSKCPATCFC.

Belongs to the CRISP family. In terms of tissue distribution, expressed by the venom gland.

It localises to the secreted. Its function is as follows. Blocks olfactory (CNGA2) and retinal (CNGA1) CNG channel currents. Does not affect neither depolarization- nor caffeine-induced contraction of smooth muscle. The protein is Cysteine-rich venom protein pseudechetoxin-like of Oxyuranus microlepidotus (Inland taipan).